The chain runs to 317 residues: D-alanine--D-alanine ligase (317 aa).

Positions 104–303 constitute an ATP-grasp domain; the sequence is KRVWLQHGLP…YAELCVAILA (200 aa). 130-185 contributes to the ATP binding site; that stretch reads PDRLGLPLILKPPHEGSTVGITKVAACADMEQAYAAASHFDEVVLAEQFVRGRELT. Mg(2+)-binding residues include Asp-257, Glu-270, and Asn-272.

It belongs to the D-alanine--D-alanine ligase family. It depends on Mg(2+) as a cofactor. Mn(2+) is required as a cofactor.

The protein localises to the cytoplasm. It catalyses the reaction 2 D-alanine + ATP = D-alanyl-D-alanine + ADP + phosphate + H(+). It participates in cell wall biogenesis; peptidoglycan biosynthesis. Functionally, cell wall formation. The protein is D-alanine--D-alanine ligase of Bordetella avium (strain 197N).